A 152-amino-acid polypeptide reads, in one-letter code: Methylglyoxal synthase (152 aa).

One can recognise an MGS-like domain in the interval 6-152 (RKISARKSIA…YDGYLAERLA (147 aa)). Substrate-binding positions include His-19, Lys-23, 45–48 (TGTT), and 65–66 (SG). Residue Asp-71 is the Proton donor/acceptor of the active site. His-98 provides a ligand contact to substrate.

It belongs to the methylglyoxal synthase family.

The enzyme catalyses dihydroxyacetone phosphate = methylglyoxal + phosphate. In terms of biological role, catalyzes the formation of methylglyoxal from dihydroxyacetone phosphate. The chain is Methylglyoxal synthase from Actinobacillus pleuropneumoniae serotype 3 (strain JL03).